Consider the following 1183-residue polypeptide: DNA-directed RNA polymerase subunit beta' (1183 aa).

The Zn(2+) site is built by cysteine 60, cysteine 62, cysteine 75, and cysteine 78. Residues aspartate 449, aspartate 451, and aspartate 453 each coordinate Mg(2+). Residues cysteine 794, cysteine 867, cysteine 874, and cysteine 877 each coordinate Zn(2+).

The protein belongs to the RNA polymerase beta' chain family. The RNAP catalytic core consists of 2 alpha, 1 beta, 1 beta' and 1 omega subunit. When a sigma factor is associated with the core the holoenzyme is formed, which can initiate transcription. The cofactor is Mg(2+). Zn(2+) serves as cofactor.

The catalysed reaction is RNA(n) + a ribonucleoside 5'-triphosphate = RNA(n+1) + diphosphate. In terms of biological role, DNA-dependent RNA polymerase catalyzes the transcription of DNA into RNA using the four ribonucleoside triphosphates as substrates. This is DNA-directed RNA polymerase subunit beta' from Caldanaerobacter subterraneus subsp. tengcongensis (strain DSM 15242 / JCM 11007 / NBRC 100824 / MB4) (Thermoanaerobacter tengcongensis).